Reading from the N-terminus, the 200-residue chain is Ubiquitin-conjugating enzyme E2 K (200 aa).

An N-acetylalanine modification is found at A2. The 151-residue stretch at 4–154 (IAVQRIKREF…ARLWAHVYAG (151 aa)) folds into the UBC core domain. K14 carries the N6-acetyllysine; alternate modification. K14 participates in a covalent cross-link: Glycyl lysine isopeptide (Lys-Gly) (interchain with G-Cter in SUMO); alternate. A Glycyl lysine isopeptide (Lys-Gly) (interchain with G-Cter in SUMO1); alternate cross-link involves residue K14. C92 (glycyl thioester intermediate) is an active-site residue. Residue S159 is modified to Phosphoserine. The region spanning 160-200 (PEYTKKIENLCAMGFDRNAVIVALSSKSWDVETATELLLSN) is the UBA domain.

It belongs to the ubiquitin-conjugating enzyme family. In terms of assembly, interacts with RNF138/NARF. Interacts with BRCA1. Sumoylation at Lys-14 impairs catalytic activity.

The protein resides in the cytoplasm. The enzyme catalyses S-ubiquitinyl-[E1 ubiquitin-activating enzyme]-L-cysteine + [E2 ubiquitin-conjugating enzyme]-L-cysteine = [E1 ubiquitin-activating enzyme]-L-cysteine + S-ubiquitinyl-[E2 ubiquitin-conjugating enzyme]-L-cysteine.. It participates in protein modification; protein ubiquitination. Functionally, accepts ubiquitin from the E1 complex and catalyzes its covalent attachment to other proteins. In vitro, in the presence or in the absence of BRCA1-BARD1 E3 ubiquitin-protein ligase complex, catalyzes the synthesis of 'Lys-48'-linked polyubiquitin chains. Does not transfer ubiquitin directly to but elongates monoubiquitinated substrate protein. Mediates the selective degradation of short-lived and abnormal proteins, such as the endoplasmic reticulum-associated degradation (ERAD) of misfolded lumenal proteins. Ubiquitinates huntingtin. May mediate foam cell formation by the suppression of apoptosis of lipid-bearing macrophages through ubiquitination and subsequence degradation of p53/TP53. Proposed to be involved in ubiquitination and proteolytic processing of NF-kappa-B; in vitro supports ubiquitination of NFKB1. This chain is Ubiquitin-conjugating enzyme E2 K (UBE2K), found in Bos taurus (Bovine).